Reading from the N-terminus, the 340-residue chain is Glyceraldehyde-3-phosphate dehydrogenase (340 aa).

Residues 11–12 and Gly-111 each bind NAD(+); that span reads SI. Residue 140–142 participates in D-glyceraldehyde 3-phosphate binding; sequence SCN. Cys-141 functions as the Nucleophile in the catalytic mechanism. Arg-169 provides a ligand contact to NAD(+). 195–196 lines the D-glyceraldehyde 3-phosphate pocket; the sequence is HG. Residue Gln-303 coordinates NAD(+).

Belongs to the glyceraldehyde-3-phosphate dehydrogenase family. In terms of assembly, homotetramer.

The protein localises to the cytoplasm. The catalysed reaction is D-glyceraldehyde 3-phosphate + phosphate + NADP(+) = (2R)-3-phospho-glyceroyl phosphate + NADPH + H(+). It catalyses the reaction D-glyceraldehyde 3-phosphate + phosphate + NAD(+) = (2R)-3-phospho-glyceroyl phosphate + NADH + H(+). The protein operates within carbohydrate degradation; glycolysis; pyruvate from D-glyceraldehyde 3-phosphate: step 1/5. The polypeptide is Glyceraldehyde-3-phosphate dehydrogenase (Methanococcus maripaludis (strain C6 / ATCC BAA-1332)).